The primary structure comprises 395 residues: Elongation factor Tu (395 aa).

In terms of domain architecture, tr-type G spans 10-204 (KPHLNIGTIG…TVDNYIKEPI (195 aa)). The interval 19–26 (GHVDHGKT) is G1. Residue 19 to 26 (GHVDHGKT) coordinates GTP. Thr-26 contributes to the Mg(2+) binding site. The tract at residues 60 to 64 (GITIN) is G2. Residues 81–84 (DCPG) form a G3 region. GTP contacts are provided by residues 81–85 (DCPGH) and 136–139 (NKVD). The interval 136 to 139 (NKVD) is G4. Residues 174–176 (SAL) form a G5 region.

The protein belongs to the TRAFAC class translation factor GTPase superfamily. Classic translation factor GTPase family. EF-Tu/EF-1A subfamily. Monomer.

The protein resides in the cytoplasm. It catalyses the reaction GTP + H2O = GDP + phosphate + H(+). Functionally, GTP hydrolase that promotes the GTP-dependent binding of aminoacyl-tRNA to the A-site of ribosomes during protein biosynthesis. In Karelsulcia muelleri (strain GWSS) (Sulcia muelleri), this protein is Elongation factor Tu.